A 314-amino-acid polypeptide reads, in one-letter code: Nodulation protein D 1 (314 aa).

The HTH lysR-type domain maps to 6–63 (LDLNLLVALDAVMTARNLTAAARKINLSQPAMSAAIARLRTYFRDELFTMRGRELVPT). Residues 23–42 (LTAAARKINLSQPAMSAAIA) constitute a DNA-binding region (H-T-H motif).

It belongs to the LysR transcriptional regulatory family.

Its function is as follows. NodD regulates the expression of the nodABCFE genes which encode other nodulation proteins. NodD is also a negative regulator of its own expression. Binds flavonoids as inducers. In Bradyrhizobium diazoefficiens (strain JCM 10833 / BCRC 13528 / IAM 13628 / NBRC 14792 / USDA 110), this protein is Nodulation protein D 1 (nodD1).